A 244-amino-acid polypeptide reads, in one-letter code: MTLDLDAHKKDDKLLITTIQQEYKILAEYKMIESEKLSGIYVIPSYANSLQWFGVFFGRQGLYAESVFRFTILLPDRFPDDKSLPTIIFQQDVIHPHVCPYTHSLDVSHAFPEWRCGEDHLWQLLKYLQVIFSDPLDSIRGIEVDKLKNREAAELLMNNKEEYVARVQENIKESKEHIFDTPPTEDPHYIVFEKFQQDVHGPVLERIKAGRSKQTEPSAQQGNGGHATGLSWVKEGEFKPLSIE.

Positions 20-176 (QQEYKILAEY…VQENIKESKE (157 aa)) constitute a UBC core domain. The interval 209–244 (AGRSKQTEPSAQQGNGGHATGLSWVKEGEFKPLSIE) is disordered.

This sequence belongs to the ubiquitin-conjugating enzyme family. FTS subfamily.

In Drosophila simulans (Fruit fly), this protein is Protein crossbronx (cbx).